We begin with the raw amino-acid sequence, 223 residues long: 7-cyano-7-deazaguanine synthase (223 aa).

Residue 10–20 participates in ATP binding; that stretch reads FSGGQDSTTCL. 4 residues coordinate Zn(2+): Cys188, Cys197, Cys200, and Cys203.

It belongs to the QueC family. Requires Zn(2+) as cofactor.

It catalyses the reaction 7-carboxy-7-deazaguanine + NH4(+) + ATP = 7-cyano-7-deazaguanine + ADP + phosphate + H2O + H(+). It participates in purine metabolism; 7-cyano-7-deazaguanine biosynthesis. Its function is as follows. Catalyzes the ATP-dependent conversion of 7-carboxy-7-deazaguanine (CDG) to 7-cyano-7-deazaguanine (preQ(0)). This chain is 7-cyano-7-deazaguanine synthase, found in Phocaeicola vulgatus (strain ATCC 8482 / DSM 1447 / JCM 5826 / CCUG 4940 / NBRC 14291 / NCTC 11154) (Bacteroides vulgatus).